A 209-amino-acid polypeptide reads, in one-letter code: Uracil phosphoribosyltransferase (209 aa).

5-phospho-alpha-D-ribose 1-diphosphate contacts are provided by residues R79, R104, and 131-139; that span reads DPMLATGGS. Uracil is bound by residues I194 and 199–201; that span reads GDA. D200 is a binding site for 5-phospho-alpha-D-ribose 1-diphosphate.

Belongs to the UPRTase family. Mg(2+) serves as cofactor.

It catalyses the reaction UMP + diphosphate = 5-phospho-alpha-D-ribose 1-diphosphate + uracil. It participates in pyrimidine metabolism; UMP biosynthesis via salvage pathway; UMP from uracil: step 1/1. Its activity is regulated as follows. Allosterically activated by GTP. Functionally, catalyzes the conversion of uracil and 5-phospho-alpha-D-ribose 1-diphosphate (PRPP) to UMP and diphosphate. This Streptococcus pneumoniae serotype 4 (strain ATCC BAA-334 / TIGR4) protein is Uracil phosphoribosyltransferase.